The following is a 156-amino-acid chain: ATP synthase subunit b (156 aa).

The helical transmembrane segment at 7–27 (LFAQMVVFLILAWFTMKFVWP) threads the bilayer.

Belongs to the ATPase B chain family. In terms of assembly, F-type ATPases have 2 components, F(1) - the catalytic core - and F(0) - the membrane proton channel. F(1) has five subunits: alpha(3), beta(3), gamma(1), delta(1), epsilon(1). F(0) has three main subunits: a(1), b(2) and c(10-14). The alpha and beta chains form an alternating ring which encloses part of the gamma chain. F(1) is attached to F(0) by a central stalk formed by the gamma and epsilon chains, while a peripheral stalk is formed by the delta and b chains.

The protein resides in the cell inner membrane. Its function is as follows. F(1)F(0) ATP synthase produces ATP from ADP in the presence of a proton or sodium gradient. F-type ATPases consist of two structural domains, F(1) containing the extramembraneous catalytic core and F(0) containing the membrane proton channel, linked together by a central stalk and a peripheral stalk. During catalysis, ATP synthesis in the catalytic domain of F(1) is coupled via a rotary mechanism of the central stalk subunits to proton translocation. Component of the F(0) channel, it forms part of the peripheral stalk, linking F(1) to F(0). This Paraburkholderia phymatum (strain DSM 17167 / CIP 108236 / LMG 21445 / STM815) (Burkholderia phymatum) protein is ATP synthase subunit b.